Reading from the N-terminus, the 400-residue chain is U-box domain-containing protein 37 (400 aa).

The stretch at 229–298 forms a coiled coil; that stretch reads KEWESAYLEE…RKAKEERDLL (70 aa). One can recognise a U-box domain in the interval 324 to 398; that stretch reads EAPQYFICPI…QEWLHASSSF (75 aa).

It carries out the reaction S-ubiquitinyl-[E2 ubiquitin-conjugating enzyme]-L-cysteine + [acceptor protein]-L-lysine = [E2 ubiquitin-conjugating enzyme]-L-cysteine + N(6)-ubiquitinyl-[acceptor protein]-L-lysine.. It participates in protein modification; protein ubiquitination. Functionally, functions as an E3 ubiquitin ligase. This is U-box domain-containing protein 37 (PUB37) from Arabidopsis thaliana (Mouse-ear cress).